Reading from the N-terminus, the 294-residue chain is Undecaprenyl-diphosphatase (294 aa).

6 helical membrane-spanning segments follow: residues 39 to 59 (PGAA…ILYF), 93 to 113 (ATLG…GFTL), 123 to 143 (NLWI…MVDA), 198 to 218 (SFLM…IKAV), 232 to 252 (PTLV…IGFL), and 268 to 288 (IGLA…AIDP).

The protein belongs to the UppP family.

It localises to the cell membrane. The enzyme catalyses di-trans,octa-cis-undecaprenyl diphosphate + H2O = di-trans,octa-cis-undecaprenyl phosphate + phosphate + H(+). Its function is as follows. Catalyzes the dephosphorylation of undecaprenyl diphosphate (UPP). Confers resistance to bacitracin. This is Undecaprenyl-diphosphatase from Bifidobacterium longum (strain DJO10A).